Consider the following 440-residue polypeptide: Chromosome partition protein MukF (440 aa).

The segment at 208 to 236 (LSETSGTLRELQDTLEAAGDKLQANLLRI) is leucine-zipper.

The protein belongs to the MukF family. Interacts, and probably forms a ternary complex, with MukE and MukB via its C-terminal region. The complex formation is stimulated by calcium or magnesium. It is required for an interaction between MukE and MukB.

It localises to the cytoplasm. The protein localises to the nucleoid. Its function is as follows. Involved in chromosome condensation, segregation and cell cycle progression. May participate in facilitating chromosome segregation by condensation DNA from both sides of a centrally located replisome during cell division. Not required for mini-F plasmid partitioning. Probably acts via its interaction with MukB and MukE. Overexpression results in anucleate cells. It has a calcium binding activity. This chain is Chromosome partition protein MukF, found in Citrobacter koseri (strain ATCC BAA-895 / CDC 4225-83 / SGSC4696).